A 501-amino-acid polypeptide reads, in one-letter code: Tetrachloroethene reductive dehalogenase (501 aa).

The tat-type signal signal peptide spans 1–37 (MEKKKKPELSRRDFGKLIIGGGAAATIAPFGVPGANA). Corrinoid contacts are provided by residues Ala74, Tyr207, 309 to 314 (NGVGQS), 329 to 332 (MGAC), and 341 to 343 (VRL). Positions 356–386 (KPIDFGVTEFCETCKKCARECPSKAITEGPR) constitute a 4Fe-4S ferredoxin-type 1 domain. The [4Fe-4S] cluster site is built by Cys366, Cys369, Cys372, and Cys376. Residue 394-401 (HNQSGKLQ) coordinates corrinoid. Cys409 lines the [4Fe-4S] cluster pocket. Tyr419 is a binding site for corrinoid. [4Fe-4S] cluster contacts are provided by Cys420, Cys423, and Cys427. The 20-residue stretch at 420 to 439 (CGVCVAVCPFTKGNIWIHDG) folds into the 4Fe-4S ferredoxin-type 2 domain.

It belongs to the PceA family. In terms of assembly, monomer. The cofactor is [4Fe-4S] cluster. Corrinoid serves as cofactor. Predicted to be exported by the Tat system. The position of the signal peptide cleavage has not been experimentally proven.

Its subcellular location is the cytoplasm. It is found in the cell inner membrane. The enzyme catalyses trichloroethene + chloride + A + H(+) = tetrachloroethene + AH2. It carries out the reaction trichloroethene + AH2 = (Z)-1,2-dichloroethene + chloride + A + H(+). With respect to regulation, both the processed and unprocessed enzymes are catalytically active. PCE-dependent growth and PceA activity are inhibited in the presence of high concentrations of 5,6-dimethylbenzimidazole (DMB), probably due to the formation a DMB-containing nor-B12 cofactor. Dechlorination of PCE is stimulated by ammonium ions. Activity is inhibited by chlorinated methanes. Its function is as follows. Catalyzes the reductive dechlorination of tetrachloroethene (PCE) to trichloroethene (TCE) and of trichloroethene to cis-1,2-dichloroethene (DCE). In addition, trans-1,3-dichloropropene, 1,1,3-trichloropropene and 2,3-dichloropropene are reduced to a mixture of mono-chloropropenes, 1,1-dichloropropene, and 2-chloropropene, respectively. Is also able to convert brominated phenols such as 4-bromophenol (4-BP), 2,4-dibromophenol (2,4-DBP) and 2,4,6-tribromophenol (2,4,6-TBP). Utilizes formate or pyruvate as electron donors. Titanium(III) citrate could also serve as electron donor. Reduced methyl viologen can act as the artificial electron donor. This chain is Tetrachloroethene reductive dehalogenase, found in Sulfurospirillum multivorans (Dehalospirillum multivorans).